We begin with the raw amino-acid sequence, 388 residues long: Dual-specificity RNA methyltransferase RlmN (388 aa).

E109 functions as the Proton acceptor in the catalytic mechanism. Residues 115–354 (EDDRATLCVS…TIVRKTRGDD (240 aa)) form the Radical SAM core domain. Cysteines 122 and 359 form a disulfide. 3 residues coordinate [4Fe-4S] cluster: C129, C133, and C136. S-adenosyl-L-methionine is bound by residues 183–184 (GE), S215, 237–239 (SLH), and N316. C359 acts as the S-methylcysteine intermediate in catalysis.

This sequence belongs to the radical SAM superfamily. RlmN family. [4Fe-4S] cluster serves as cofactor.

Its subcellular location is the cytoplasm. The enzyme catalyses adenosine(2503) in 23S rRNA + 2 reduced [2Fe-2S]-[ferredoxin] + 2 S-adenosyl-L-methionine = 2-methyladenosine(2503) in 23S rRNA + 5'-deoxyadenosine + L-methionine + 2 oxidized [2Fe-2S]-[ferredoxin] + S-adenosyl-L-homocysteine. It carries out the reaction adenosine(37) in tRNA + 2 reduced [2Fe-2S]-[ferredoxin] + 2 S-adenosyl-L-methionine = 2-methyladenosine(37) in tRNA + 5'-deoxyadenosine + L-methionine + 2 oxidized [2Fe-2S]-[ferredoxin] + S-adenosyl-L-homocysteine. Its function is as follows. Specifically methylates position 2 of adenine 2503 in 23S rRNA and position 2 of adenine 37 in tRNAs. m2A2503 modification seems to play a crucial role in the proofreading step occurring at the peptidyl transferase center and thus would serve to optimize ribosomal fidelity. This Citrobacter koseri (strain ATCC BAA-895 / CDC 4225-83 / SGSC4696) protein is Dual-specificity RNA methyltransferase RlmN.